The following is a 310-amino-acid chain: Transcription factor UNE12 (310 aa).

2 disordered regions span residues histidine 124 to proline 156 and serine 229 to aspartate 253. The bHLH domain occupies glutamine 152 to leucine 201.

Homodimer. As to expression, expressed constitutively in roots, leaves, stems, and flowers.

The protein resides in the nucleus. Functionally, required for ovule fertilization. This chain is Transcription factor UNE12 (UNE12), found in Arabidopsis thaliana (Mouse-ear cress).